A 174-amino-acid polypeptide reads, in one-letter code: NADH-quinone oxidoreductase subunit B 2 (174 aa).

[4Fe-4S] cluster is bound by residues Cys51, Cys52, Cys116, and Cys145.

Belongs to the complex I 20 kDa subunit family. NDH-1 is composed of 14 different subunits. Subunits NuoB, C, D, E, F, and G constitute the peripheral sector of the complex. [4Fe-4S] cluster serves as cofactor.

Its subcellular location is the cell inner membrane. The catalysed reaction is a quinone + NADH + 5 H(+)(in) = a quinol + NAD(+) + 4 H(+)(out). NDH-1 shuttles electrons from NADH, via FMN and iron-sulfur (Fe-S) centers, to quinones in the respiratory chain. The immediate electron acceptor for the enzyme in this species is believed to be ubiquinone. Couples the redox reaction to proton translocation (for every two electrons transferred, four hydrogen ions are translocated across the cytoplasmic membrane), and thus conserves the redox energy in a proton gradient. This is NADH-quinone oxidoreductase subunit B 2 from Thermodesulfovibrio yellowstonii (strain ATCC 51303 / DSM 11347 / YP87).